Consider the following 151-residue polypeptide: Peptide deformylase (151 aa).

The Fe cation site is built by cysteine 88 and histidine 130. Glutamate 131 is a catalytic residue. Position 134 (histidine 134) interacts with Fe cation.

It belongs to the polypeptide deformylase family. Requires Fe(2+) as cofactor.

It catalyses the reaction N-terminal N-formyl-L-methionyl-[peptide] + H2O = N-terminal L-methionyl-[peptide] + formate. Removes the formyl group from the N-terminal Met of newly synthesized proteins. Requires at least a dipeptide for an efficient rate of reaction. N-terminal L-methionine is a prerequisite for activity but the enzyme has broad specificity at other positions. The protein is Peptide deformylase of Heliobacterium modesticaldum (strain ATCC 51547 / Ice1).